We begin with the raw amino-acid sequence, 119 residues long: MVQENKNFATAQAKSIRVSSRKLNLVAAFIRNMKVSEALVQLTFSPKRIAKVVKDCLQSAVANAENNLGLDIDRLVITKATVGKALVMKRVMPRAKGRATRINKFFSNLYITVTEKEDN.

The protein belongs to the universal ribosomal protein uL22 family. As to quaternary structure, part of the 50S ribosomal subunit.

In terms of biological role, this protein binds specifically to 23S rRNA; its binding is stimulated by other ribosomal proteins, e.g. L4, L17, and L20. It is important during the early stages of 50S assembly. It makes multiple contacts with different domains of the 23S rRNA in the assembled 50S subunit and ribosome. Functionally, the globular domain of the protein is located near the polypeptide exit tunnel on the outside of the subunit, while an extended beta-hairpin is found that lines the wall of the exit tunnel in the center of the 70S ribosome. The polypeptide is Large ribosomal subunit protein uL22 (Rickettsia rickettsii (strain Iowa)).